Here is a 569-residue protein sequence, read N- to C-terminus: ABC1 family protein MCP2 (569 aa).

The N-terminal 18 residues, 1–18 (MMTKAFFNKLPFEVFRRY), are a transit peptide targeting the mitochondrion. At 19–34 (VRTGKSIPQRSPRTRK) the chain is on the mitochondrial matrix side. The helical transmembrane segment at 35 to 51 (SLLVGGTIASAVVLYNF) threads the bilayer. Topologically, residues 52 to 569 (NDTFHDSVKH…KFIPKTWLSS (518 aa)) are mitochondrial intermembrane.

The protein belongs to the protein kinase superfamily. ADCK protein kinase family.

The protein resides in the mitochondrion. The protein localises to the mitochondrion inner membrane. Its function is as follows. Component of MIOREX complexes, large expressome-like assemblies of ribosomes with factors involved in all the steps of post-transcriptional gene expression. Involved in mitochondrial lipid homeostasis. In Saccharomyces cerevisiae (strain ATCC 204508 / S288c) (Baker's yeast), this protein is ABC1 family protein MCP2.